Consider the following 415-residue polypeptide: YDG domain-containing protein At5g47160 (415 aa).

The tract at residues 163 to 186 (KKLSNASRLRANAHRPTQHKDERR) is disordered. Positions 262 to 407 (GSVPGIKVGD…NILFKFKLRR (146 aa)) constitute a YDG domain.

It localises to the nucleus. This is YDG domain-containing protein At5g47160 from Arabidopsis thaliana (Mouse-ear cress).